Consider the following 154-residue polypeptide: Putative pre-16S rRNA nuclease (154 aa).

This sequence belongs to the YqgF nuclease family.

It is found in the cytoplasm. Its function is as follows. Could be a nuclease involved in processing of the 5'-end of pre-16S rRNA. This Rickettsia africae (strain ESF-5) protein is Putative pre-16S rRNA nuclease.